Consider the following 606-residue polypeptide: DNA mismatch repair protein MutL (606 aa).

Residues 350-371 are disordered; the sequence is GWRPSAPSAPWTPEASPSRPYQ.

It belongs to the DNA mismatch repair MutL/HexB family.

Functionally, this protein is involved in the repair of mismatches in DNA. It is required for dam-dependent methyl-directed DNA mismatch repair. May act as a 'molecular matchmaker', a protein that promotes the formation of a stable complex between two or more DNA-binding proteins in an ATP-dependent manner without itself being part of a final effector complex. This is DNA mismatch repair protein MutL from Rhizobium rhizogenes (strain K84 / ATCC BAA-868) (Agrobacterium radiobacter).